The sequence spans 424 residues: L-threonine:uridine-5'-aldehyde transaldolase (424 aa).

Lys235 bears the N6-(pyridoxal phosphate)lysine mark.

The protein belongs to the SHMT family. Requires pyridoxal 5'-phosphate as cofactor.

The catalysed reaction is uridine-5'-aldehyde + L-threonine = (5'S,6'S)-C-glycyluridine + acetaldehyde. Its pathway is antibiotic biosynthesis. In terms of biological role, transaldolase involved in the biosynthesis of the lipopeptidyl nucleoside antibiotic A-90289. Catalyzes the condensation of L-threonine and uridine-5'-aldehyde to form 5'-C-glycyluridine (GlyU). Forms (5'S,6'S)-GlyU. Has no activity with alternative amino acids, such as glycine or serine. The sequence is that of L-threonine:uridine-5'-aldehyde transaldolase from Streptomyces sp.